Reading from the N-terminus, the 140-residue chain is 3-hydroxyacyl-[acyl-carrier-protein] dehydratase FabZ (140 aa).

The active site involves histidine 48.

The protein belongs to the thioester dehydratase family. FabZ subfamily.

The protein resides in the cytoplasm. It catalyses the reaction a (3R)-hydroxyacyl-[ACP] = a (2E)-enoyl-[ACP] + H2O. Involved in unsaturated fatty acids biosynthesis. Catalyzes the dehydration of short chain beta-hydroxyacyl-ACPs and long chain saturated and unsaturated beta-hydroxyacyl-ACPs. The protein is 3-hydroxyacyl-[acyl-carrier-protein] dehydratase FabZ of Pelotomaculum thermopropionicum (strain DSM 13744 / JCM 10971 / SI).